Reading from the N-terminus, the 235-residue chain is MVIGPFINASAVLLGGVLGALLSQRLPERIRVSMTSIFGLASLGIGILLVVKCANLPAMVLATLLGALIGEICLLEKGVNTAVAKAQNLFRHSRKKPAHESFIQNYVAIIVLFCASGTGIFGAMNEGMTGDPSILIAKSFLDFFTAMIFACSLGIAVSVISIPLLIIQLTLAWAAALILPLTTPSMMADFSAVGGLLLLATGLRICGIKMFPVVNMLPALLLAMPLSAAWTAWFA.

7 helical membrane-spanning segments follow: residues 2–22, 34–54, 56–76, 102–122, 147–167, 178–198, and 210–230; these read VIGP…GALL, MTSI…VKCA, LPAM…CLLE, FIQN…GIFG, MIFA…LLII, ILPL…GLLL, and MFPV…SAAW.

The protein resides in the cell membrane. This is an uncharacterized protein from Escherichia coli (strain K12).